The following is a 430-amino-acid chain: Adenylosuccinate synthetase (430 aa).

GTP-binding positions include 13–19 (GDEGKGK) and 41–43 (GHT). The Proton acceptor role is filled by Asp14. Residues Asp14 and Gly41 each coordinate Mg(2+). IMP is bound by residues 14–17 (DEGK), 39–42 (NAGH), Thr130, Arg144, Gln225, Thr240, and Arg304. The active-site Proton donor is the His42. 300–306 (ATTGRAR) contacts substrate. GTP-binding positions include Arg306, 332–334 (KLD), and 414–416 (STG).

This sequence belongs to the adenylosuccinate synthetase family. In terms of assembly, homodimer. The cofactor is Mg(2+).

It localises to the cytoplasm. The enzyme catalyses IMP + L-aspartate + GTP = N(6)-(1,2-dicarboxyethyl)-AMP + GDP + phosphate + 2 H(+). It participates in purine metabolism; AMP biosynthesis via de novo pathway; AMP from IMP: step 1/2. Functionally, plays an important role in the de novo pathway of purine nucleotide biosynthesis. Catalyzes the first committed step in the biosynthesis of AMP from IMP. This chain is Adenylosuccinate synthetase, found in Pseudomonas paraeruginosa (strain DSM 24068 / PA7) (Pseudomonas aeruginosa (strain PA7)).